Here is a 224-residue protein sequence, read N- to C-terminus: Endonuclease NucS (224 aa).

This sequence belongs to the NucS endonuclease family.

Its subcellular location is the cytoplasm. In terms of biological role, cleaves both 3' and 5' ssDNA extremities of branched DNA structures. The protein is Endonuclease NucS of Rhodococcus jostii (strain RHA1).